Reading from the N-terminus, the 590-residue chain is Methionine--tRNA ligase, mitochondrial (590 aa).

The N-terminal 26 residues, M1–A26, are a transit peptide targeting the mitochondrion. The 'HIGH' region motif lies at F51–H61. Positions K342–S346 match the 'KMSKS' region motif. Residue K345 coordinates ATP. The interval L570–K590 is disordered. Residues E571 to K590 are compositionally biased toward basic and acidic residues.

It belongs to the class-I aminoacyl-tRNA synthetase family.

The protein resides in the mitochondrion matrix. The enzyme catalyses tRNA(Met) + L-methionine + ATP = L-methionyl-tRNA(Met) + AMP + diphosphate. The chain is Methionine--tRNA ligase, mitochondrial (mars2) from Takifugu rubripes (Japanese pufferfish).